A 519-amino-acid polypeptide reads, in one-letter code: 3-octaprenyl-4-hydroxybenzoate carboxy-lyase (519 aa).

Residue Asn-177 participates in Mn(2+) binding. Prenylated FMN contacts are provided by residues 180–182 (IYR), 194–196 (RWL), and 199–200 (RG). Glu-243 contributes to the Mn(2+) binding site. Asp-318 serves as the catalytic Proton donor.

Belongs to the UbiD family. As to quaternary structure, homohexamer. It depends on prenylated FMN as a cofactor. The cofactor is Mn(2+).

The protein resides in the cell membrane. The enzyme catalyses a 4-hydroxy-3-(all-trans-polyprenyl)benzoate + H(+) = a 2-(all-trans-polyprenyl)phenol + CO2. Its pathway is cofactor biosynthesis; ubiquinone biosynthesis. In terms of biological role, catalyzes the decarboxylation of 3-octaprenyl-4-hydroxy benzoate to 2-octaprenylphenol, an intermediate step in ubiquinone biosynthesis. The polypeptide is 3-octaprenyl-4-hydroxybenzoate carboxy-lyase (Burkholderia mallei (strain ATCC 23344)).